A 66-amino-acid polypeptide reads, in one-letter code: uncharacterized protein (66 aa).

The protein belongs to the YeeT/YkfH/YpjJ family.

This is an uncharacterized protein from Escherichia coli (strain K12).